The chain runs to 120 residues: Chaperonin GroEL (120 aa).

Residue 23–27 participates in ATP binding; sequence DGTTT.

It belongs to the chaperonin (HSP60) family. Forms a cylinder of 14 subunits composed of two heptameric rings stacked back-to-back. Interacts with the co-chaperonin GroES.

Its subcellular location is the cytoplasm. It catalyses the reaction ATP + H2O + a folded polypeptide = ADP + phosphate + an unfolded polypeptide.. In terms of biological role, together with its co-chaperonin GroES, plays an essential role in assisting protein folding. The GroEL-GroES system forms a nano-cage that allows encapsulation of the non-native substrate proteins and provides a physical environment optimized to promote and accelerate protein folding. This chain is Chaperonin GroEL, found in Mycolicibacterium fallax (Mycobacterium fallax).